A 172-amino-acid chain; its full sequence is Small ribosomal subunit protein uS5 (172 aa).

Positions 17-80 constitute an S5 DRBM domain; sequence LREKMISVNR…EQARRNMFKV (64 aa).

The protein belongs to the universal ribosomal protein uS5 family. Part of the 30S ribosomal subunit. Contacts proteins S4 and S8.

In terms of biological role, with S4 and S12 plays an important role in translational accuracy. Located at the back of the 30S subunit body where it stabilizes the conformation of the head with respect to the body. This is Small ribosomal subunit protein uS5 from Burkholderia orbicola (strain AU 1054).